The following is a 518-amino-acid chain: Protein translocase subunit SecD (518 aa).

Transmembrane regions (helical) follow at residues 9-29, 356-376, 377-397, 406-426, 463-483, and 486-506; these read IVLSIICTVFAIICALPNFIQ, GKKAGLIGFVAVCIFMILSYG, VIGLFANIALILALLYILALL, LPGIAGIILTIGMAVDANVLI, LIVAFALYIFGVGAIKGFAVA, and IGIISSMFSAIIITKLLIDVW.

The protein belongs to the SecD/SecF family. SecD subfamily. Forms a complex with SecF. Part of the essential Sec protein translocation apparatus which comprises SecA, SecYEG and auxiliary proteins SecDF-YajC and YidC.

Its subcellular location is the cell inner membrane. Functionally, part of the Sec protein translocase complex. Interacts with the SecYEG preprotein conducting channel. SecDF uses the proton motive force (PMF) to complete protein translocation after the ATP-dependent function of SecA. The polypeptide is Protein translocase subunit SecD (Rickettsia prowazekii (strain Madrid E)).